A 155-amino-acid chain; its full sequence is Endoribonuclease YbeY (155 aa).

Positions 114, 118, and 124 each coordinate Zn(2+).

Belongs to the endoribonuclease YbeY family. The cofactor is Zn(2+).

It is found in the cytoplasm. Single strand-specific metallo-endoribonuclease involved in late-stage 70S ribosome quality control and in maturation of the 3' terminus of the 16S rRNA. This Cronobacter sakazakii (strain ATCC BAA-894) (Enterobacter sakazakii) protein is Endoribonuclease YbeY.